The following is a 300-amino-acid chain: Hemagglutinin 1 (300 aa).

The helical transmembrane segment at 200-221 threads the bilayer; that stretch reads FIFATVVFIFLQAGRVPEIIAD.

It is found in the cell membrane. Induces agglutination of neuraminidase-treated erythrocytes. In Eikenella corrodens, this protein is Hemagglutinin 1 (hag1).